Here is a 132-residue protein sequence, read N- to C-terminus: uncharacterized protein (132 aa).

The disordered stretch occupies residues 107–132; that stretch reads LNTFSGSGQKHSQPGSGQHPFSFRKD. Residues 108–122 show a composition bias toward polar residues; that stretch reads NTFSGSGQKHSQPGS.

This is an uncharacterized protein from Bacillus subtilis (strain 168).